Consider the following 77-residue polypeptide: Acyl carrier protein (77 aa).

The region spanning 1–76 (MAIFDDVKKV…DVVNYIENLQ (76 aa)) is the Carrier domain. At Ser-36 the chain carries O-(pantetheine 4'-phosphoryl)serine.

This sequence belongs to the acyl carrier protein (ACP) family. 4'-phosphopantetheine is transferred from CoA to a specific serine of apo-ACP by AcpS. This modification is essential for activity because fatty acids are bound in thioester linkage to the sulfhydryl of the prosthetic group.

The protein resides in the cytoplasm. It participates in lipid metabolism; fatty acid biosynthesis. Functionally, carrier of the growing fatty acid chain in fatty acid biosynthesis. In Campylobacter lari (strain RM2100 / D67 / ATCC BAA-1060), this protein is Acyl carrier protein.